Here is a 232-residue protein sequence, read N- to C-terminus: CD302 antigen (232 aa).

A signal peptide spans 1-22; it reads MPRAAPPALLLPLLGLAAAAAA. The Extracellular portion of the chain corresponds to 23-168; sequence DCPSSTWVQF…YEKKYLSDNR (146 aa). Residues 32–152 enclose the C-type lectin domain; sequence FQDSCYIFLQ…CEVSSVEGTL (121 aa). Asn-109 carries N-linked (GlcNAc...) asparagine glycosylation. Cysteines 128 and 143 form a disulfide. Residues 169–189 form a helical membrane-spanning segment; sequence ILISALVIASTVILTVLGAVV. Over 190–232 the chain is Cytoplasmic; sequence WFLYKRSLDSGFTTVFSAAHQSPYNDDCVLVVAEENEYDIQFN.

Its subcellular location is the membrane. The protein localises to the cell projection. It is found in the filopodium. It localises to the cytoplasm. The protein resides in the cell cortex. Its subcellular location is the microvillus. Its function is as follows. Potential multifunctional C-type lectin receptor that may play roles in endocytosis and phagocytosis as well as in cell adhesion and migration. The protein is CD302 antigen of Bos taurus (Bovine).